Reading from the N-terminus, the 205-residue chain is CMRF35-like molecule 2 (205 aa).

Positions 1–17 (MWLLPALLLLCLSGCLS) are cleaved as a signal peptide. The region spanning 18–120 (LKGPGSVTGT…VLDSWSRDPS (103 aa)) is the Ig-like V-type domain. Residues 18–173 (LKGPGSVTGT…NSGFRLSSPH (156 aa)) are Extracellular-facing. An intrachain disulfide couples Cys36 to Cys104. A glycan (N-linked (GlcNAc...) asparagine) is linked at Asn154. Residues 174 to 194 (FLLVVLLKLPLLLSMLGAVFW) form a helical membrane-spanning segment. The Cytoplasmic segment spans residues 195–205 (VNRPQWAPPGR).

The protein belongs to the CD300 family. As to quaternary structure, interacts with TYROBP. In terms of processing, N-glycosylated. As to expression, present on the surface of mature hematopoietic cells of the monocyte and myeloid lineages (at protein level).

It is found in the cell membrane. Probably acts as an activating receptor. The polypeptide is CMRF35-like molecule 2 (CD300E) (Homo sapiens (Human)).